A 723-amino-acid chain; its full sequence is Capsid protein (723 aa).

Positions 658–679 are disordered; sequence QATPPPFKKPRTEDQEENPEET.

Belongs to the anelloviridae capsid protein family.

The protein localises to the virion. Self assemble to form an icosahedral capsid. The protein is Capsid protein of Torque teno virus (isolate Japanese macaque/Japan/Mf-TTV9/2000) (TTV).